We begin with the raw amino-acid sequence, 403 residues long: Ribosomal RNA large subunit methyltransferase I (403 aa).

The region spanning 9 to 86 (YPRLVLSKGR…KAESIDIAFF (78 aa)) is the PUA domain.

It belongs to the methyltransferase superfamily. RlmI family.

The protein resides in the cytoplasm. The enzyme catalyses cytidine(1962) in 23S rRNA + S-adenosyl-L-methionine = 5-methylcytidine(1962) in 23S rRNA + S-adenosyl-L-homocysteine + H(+). Specifically methylates the cytosine at position 1962 (m5C1962) of 23S rRNA. This Salmonella gallinarum (strain 287/91 / NCTC 13346) protein is Ribosomal RNA large subunit methyltransferase I.